The primary structure comprises 429 residues: Guanine nucleotide-binding protein subunit alpha (429 aa).

A lipid anchor (N-myristoyl glycine) is attached at glycine 2. A lipid anchor (S-palmitoyl cysteine) is attached at cysteine 3. The region spanning 40-429 is the G-alpha domain; sequence KGVKLLLLGA…QQNLKKSGIM (390 aa). A G1 motif region spans residues 43–56; the sequence is KLLLLGAGESGKST. 6 residues coordinate GTP: glutamate 51, serine 52, glycine 53, lysine 54, serine 55, and threonine 56. Serine 55 provides a ligand contact to Mg(2+). Residues 125 to 197 form a not present in other G-proteins region; the sequence is LKQIDADVAG…KDSEQFTRLS (73 aa). The tract at residues 249–257 is G2 motif; sequence DILKGRIKT. Positions 251, 257, 279, 345, 346, 348, and 401 each coordinate GTP. Mg(2+) is bound at residue threonine 257. Positions 272-281 are G3 motif; that stretch reads FKVLDAGGQR. The tract at residues 341 to 348 is G4 motif; it reads ILFLNKID. Residues 399-404 form a G5 motif region; the sequence is TCATDS.

This sequence belongs to the G-alpha family. G(q) subfamily. As to quaternary structure, g proteins are composed of 3 units; alpha, beta and gamma. The alpha chain contains the guanine nucleotide binding site. It depends on Mg(2+) as a cofactor.

Guanine nucleotide-binding proteins (G proteins) are involved as modulators or transducers in various transmembrane signaling systems. Involved in the mating pathway. The sequence is that of Guanine nucleotide-binding protein subunit alpha (CAG1) from Candida albicans (strain WO-1) (Yeast).